The chain runs to 207 residues: Sodium/potassium-transporting ATPase subunit beta-1-interacting protein 1 (207 aa).

Transmembrane regions (helical) follow at residues 2 to 22, 35 to 55, and 62 to 82; these read GRCD…VAAL, APIL…FGTV, and LILY…IICF. N100 carries N-linked (GlcNAc...) asparagine glycosylation. Residues 147 to 167 form a helical membrane-spanning segment; that stretch reads VVSSALQVFLALFGFVYACYV.

This sequence belongs to the NKAIN family. As to quaternary structure, interacts with atp1b1 C-terminus.

It localises to the cell membrane. The polypeptide is Sodium/potassium-transporting ATPase subunit beta-1-interacting protein 1 (nkain1) (Danio rerio (Zebrafish)).